A 207-amino-acid chain; its full sequence is Heat shock protein beta-1 (207 aa).

Arginine 12 carries the post-translational modification Omega-N-methylarginine. Serine 13 carries the post-translational modification Phosphoserine. Serine 15 carries the phosphoserine; by MAPKAPK2 and MAPKAPK3 modification. Serine 27 carries the phosphoserine modification. Positions 72–207 (APAYSRLLSR…AGKSEKPGTK (136 aa)) are interaction with TGFB1I1. One can recognise a sHSP domain in the interval 78–186 (LLSRQLSSGV…QSAEITIPVT (109 aa)). Phosphoserine; by MAPKAPK2, MAPKAPK3 and MAPKAPK5 is present on residues serine 80 and serine 84. 3 positions are modified to phosphoserine: serine 85, serine 88, and serine 100. At lysine 125 the chain carries N6-acetyllysine. The segment at 151–181 (DPTQVSSSLSPEGTLSVEAPLPKPATQSAEI) is disordered. A compositionally biased stretch (polar residues) spans 153 to 163 (TQVSSSLSPEG). A Phosphothreonine modification is found at threonine 176. Residues serine 178 and serine 201 each carry the phosphoserine modification.

Belongs to the small heat shock protein (HSP20) family. As to quaternary structure, homooligomer. Homodimer; becomes monomeric upon activation. Heterooligomer; with HSPB6. Associates with alpha- and beta-tubulin. Interacts with TGFB1I1. Interacts with CRYAB. Interacts with HSPB8. Interacts with HSPBAP1. In terms of processing, phosphorylated upon exposure to protein kinase C activators and heat shock. Phosphorylation by MAPKAPK2 and MAPKAPK3 in response to stress dissociates HSPB1 from large small heat-shock protein (sHsps) oligomers and impairs its chaperone activity and ability to protect against oxidative stress effectively. Phosphorylation by MAPKAPK5 in response to PKA stimulation induces F-actin rearrangement.

Its subcellular location is the cytoplasm. It is found in the nucleus. It localises to the cytoskeleton. The protein resides in the spindle. Functionally, small heat shock protein which functions as a molecular chaperone probably maintaining denatured proteins in a folding-competent state. Plays a role in stress resistance and actin organization. Through its molecular chaperone activity may regulate numerous biological processes including the phosphorylation and the axonal transport of neurofilament proteins. This is Heat shock protein beta-1 (HSPB1) from Sus scrofa (Pig).